The sequence spans 23 residues: NADP phosphatase 2 (23 aa).

Homodimer.

The protein localises to the cytoplasm. The sequence is that of NADP phosphatase 2 from Arthrobacter sp. (strain KM).